Here is a 256-residue protein sequence, read N- to C-terminus: Thiazole synthase (256 aa).

The Schiff-base intermediate with DXP role is filled by Lys-96. 1-deoxy-D-xylulose 5-phosphate is bound by residues Gly-157, 183–184 (AG), and 205–206 (NT).

This sequence belongs to the ThiG family. Homotetramer. Forms heterodimers with either ThiH or ThiS.

Its subcellular location is the cytoplasm. It carries out the reaction [ThiS sulfur-carrier protein]-C-terminal-Gly-aminoethanethioate + 2-iminoacetate + 1-deoxy-D-xylulose 5-phosphate = [ThiS sulfur-carrier protein]-C-terminal Gly-Gly + 2-[(2R,5Z)-2-carboxy-4-methylthiazol-5(2H)-ylidene]ethyl phosphate + 2 H2O + H(+). Its pathway is cofactor biosynthesis; thiamine diphosphate biosynthesis. In terms of biological role, catalyzes the rearrangement of 1-deoxy-D-xylulose 5-phosphate (DXP) to produce the thiazole phosphate moiety of thiamine. Sulfur is provided by the thiocarboxylate moiety of the carrier protein ThiS. In vitro, sulfur can be provided by H(2)S. This Bacillus anthracis protein is Thiazole synthase.